A 154-amino-acid chain; its full sequence is Myoglobin (154 aa).

The Globin domain maps to Gly2–Lys148. Ser4 carries the post-translational modification Phosphoserine. His65 provides a ligand contact to nitrite. His65 is an O2 binding site. Thr68 carries the phosphothreonine modification. His94 serves as a coordination point for heme b.

As to quaternary structure, monomer.

Its subcellular location is the cytoplasm. The protein localises to the sarcoplasm. The catalysed reaction is Fe(III)-heme b-[protein] + nitric oxide + H2O = Fe(II)-heme b-[protein] + nitrite + 2 H(+). The enzyme catalyses H2O2 + AH2 = A + 2 H2O. Monomeric heme protein which primary function is to store oxygen and facilitate its diffusion within muscle tissues. Reversibly binds oxygen through a pentacoordinated heme iron and enables its timely and efficient release as needed during periods of heightened demand. Depending on the oxidative conditions of tissues and cells, and in addition to its ability to bind oxygen, it also has a nitrite reductase activity whereby it regulates the production of bioactive nitric oxide. Under stress conditions, like hypoxia and anoxia, it also protects cells against reactive oxygen species thanks to its pseudoperoxidase activity. The protein is Myoglobin of Hystrix cristata (North African crested porcupine).